Reading from the N-terminus, the 291-residue chain is Fructose-1,6-bisphosphatase class 1 1 (291 aa).

The Mg(2+) site is built by Glu-78, Asp-95, Leu-97, and Asp-98. Substrate-binding positions include 98 to 101, Tyr-203, and Lys-233; that span reads DGSS. Glu-239 lines the Mg(2+) pocket.

It belongs to the FBPase class 1 family. Homotetramer. Mg(2+) is required as a cofactor.

It localises to the cytoplasm. It catalyses the reaction beta-D-fructose 1,6-bisphosphate + H2O = beta-D-fructose 6-phosphate + phosphate. It functions in the pathway carbohydrate biosynthesis; gluconeogenesis. The sequence is that of Fructose-1,6-bisphosphatase class 1 1 from Haloarcula marismortui (strain ATCC 43049 / DSM 3752 / JCM 8966 / VKM B-1809) (Halobacterium marismortui).